Consider the following 134-residue polypeptide: UPF0719 transmembrane protein YshE (134 aa).

A run of 4 helical transmembrane segments spans residues 10 to 30 (VEIA…LTVF), 48 to 68 (AVAM…QHSI), 78 to 98 (IGWG…FEFL), and 114 to 134 (AVGF…AAGI).

Belongs to the UPF0719 family.

It is found in the cell membrane. This chain is UPF0719 transmembrane protein YshE (yshE), found in Bacillus subtilis (strain 168).